A 348-amino-acid chain; its full sequence is D-erythrose-4-phosphate dehydrogenase (348 aa).

Residues 12-13 and Arg-81 each bind NAD(+); that span reads RI. Substrate-binding positions include 154-156, Arg-200, 213-214, and Arg-236; these read SCT and TK. Cys-155 (nucleophile) is an active-site residue. Asn-318 is a binding site for NAD(+).

This sequence belongs to the glyceraldehyde-3-phosphate dehydrogenase family. Epd subfamily. Homotetramer.

The protein resides in the cytoplasm. It carries out the reaction D-erythrose 4-phosphate + NAD(+) + H2O = 4-phospho-D-erythronate + NADH + 2 H(+). It functions in the pathway cofactor biosynthesis; pyridoxine 5'-phosphate biosynthesis; pyridoxine 5'-phosphate from D-erythrose 4-phosphate: step 1/5. Catalyzes the NAD-dependent conversion of D-erythrose 4-phosphate to 4-phosphoerythronate. In Salmonella gallinarum (strain 287/91 / NCTC 13346), this protein is D-erythrose-4-phosphate dehydrogenase.